A 67-amino-acid polypeptide reads, in one-letter code: Ceratotoxin-C (67 aa).

The signal sequence occupies residues 1 to 23; it reads MANIKAVFLICIVAFIAFHCVVA. Residues 24 to 35 constitute a propeptide that is removed on maturation; that stretch reads EPTAEDSVVVKR.

In terms of assembly, homomer of four to six subunits.

Its subcellular location is the secreted. Functionally, female-specific peptides with potent activity against Gram-positive and Gram-negative bacteria. They have as well hemolytic activity. This is Ceratotoxin-C (CTXC1) from Ceratitis capitata (Mediterranean fruit fly).